The sequence spans 492 residues: Catalase isozyme 2 (492 aa).

The tract at residues 1-32 (MDPYKFRPSSSNDTPFWTTNAGDPVSNNNSSM) is disordered. Over residues 8–32 (PSSSNDTPFWTTNAGDPVSNNNSSM) the composition is skewed to polar residues. Active-site residues include His65 and Asn138. Tyr348 serves as a coordination point for heme.

This sequence belongs to the catalase family. Homotetramer. Requires heme as cofactor. As to expression, abundant in hypocotyls and roots. Low levels are seen in the endosperms and cotyledons.

Its subcellular location is the peroxisome. The protein resides in the glyoxysome. The enzyme catalyses 2 H2O2 = O2 + 2 H2O. Occurs in almost all aerobically respiring organisms and serves to protect cells from the toxic effects of hydrogen peroxide. The chain is Catalase isozyme 2 (CAT2) from Ricinus communis (Castor bean).